The following is a 214-amino-acid chain: Ribonuclease HII (214 aa).

The RNase H type-2 domain maps to 27–214 (SVVAGIDEAG…SPIKQMCAIV (188 aa)). A divalent metal cation is bound by residues Asp-33, Glu-34, and Asp-126.

It belongs to the RNase HII family. Mn(2+) is required as a cofactor. Mg(2+) serves as cofactor.

It is found in the cytoplasm. It carries out the reaction Endonucleolytic cleavage to 5'-phosphomonoester.. Endonuclease that specifically degrades the RNA of RNA-DNA hybrids. The sequence is that of Ribonuclease HII (rnhB) from Chlamydia pneumoniae (Chlamydophila pneumoniae).